A 40-amino-acid chain; its full sequence is U4-ctenitoxin-Co1c (40 aa).

Cystine bridges form between C3-C20, C10-C26, C19-C40, and C28-C38.

As to expression, expressed by the venom gland.

It is found in the secreted. In terms of biological role, not toxic to mice by intracerebroventricular injection. The protein is U4-ctenitoxin-Co1c of Ctenus ornatus (Brazilian spider).